We begin with the raw amino-acid sequence, 61 residues long: Temporin-ALj (61 aa).

The signal sequence occupies residues 1–22; it reads MFTLKKSLLLLFFLATINLSFC. The propeptide occupies 23-46; sequence EQERNAEEERRDEPDERNAEVEKR. The residue at position 59 (leucine 59) is a Leucine amide.

It belongs to the frog skin active peptide (FSAP) family. Temporin subfamily. Expressed by the skin glands.

The protein resides in the secreted. Functionally, antimicrobial peptide with activity against Gram-positive and Gram-negative bacteria and against fungi. Has been tested against S.aureus (MIC=7.5 ug/mL), B.pumilus (MIC=15.0 ug/mL), B.cereus (MIC=75.0 ug/mL), E.coli (MIC=15.0 ug/mL), B.dysenteriae (MIC=30.0 ug/mL), A.cacoaceticus (MIC=60.0 ug/mL), P.aeruginosa (MIC=7.5 ug/mL) and C.albicans (MIC=5.0 ug/mL). Also shows a weak hemolytic activity. The sequence is that of Temporin-ALj from Amolops loloensis (Lolokou Sucker Frog).